A 23-amino-acid chain; its full sequence is Caerulein precursor fragment BM2 (23 aa).

As to expression, expressed by the skin glands.

Its subcellular location is the secreted. In terms of biological role, antimicrobial peptide. The sequence is that of Caerulein precursor fragment BM2 from Xenopus boumbaensis (Mawa clawed frog).